A 248-amino-acid polypeptide reads, in one-letter code: MAGHSKWANIKHRKERQDAKKGKIFTKWIRELTVAARQGGGDPGSNPRLRLALDKALGANMTRDTIDRAVARGVGASDGDDVEELGYEGYGPGGVAVMVETMTDNRNRTAAAVRHAFTKCGGNLGTDGSVAYLFDRKGQISFAAGVDEDSLIEAAMEADADDVVTNDDGSIDVFTSFSGFYAVRNALEAAGFMAADAEIVMLPTTSAVLDLETAEKVLKLIDMLEDLDDVQNVYSNAEIPDEVMEQLG.

This sequence belongs to the TACO1 family.

Its subcellular location is the cytoplasm. This is Probable transcriptional regulatory protein PSPTO_3980 from Pseudomonas syringae pv. tomato (strain ATCC BAA-871 / DC3000).